The primary structure comprises 1266 residues: 5-oxoprolinase 1 (1266 aa).

Belongs to the oxoprolinase family. As to expression, expressed in roots, stems, leaves, flowers and siliques.

The protein resides in the cytoplasm. It carries out the reaction 5-oxo-L-proline + ATP + 2 H2O = L-glutamate + ADP + phosphate + H(+). In terms of biological role, catalyzes the cleavage of 5-oxo-L-proline to form L-glutamate coupled to the hydrolysis of ATP to ADP and inorganic phosphate. Acts in the glutathione degradation pathway. The polypeptide is 5-oxoprolinase 1 (Arabidopsis thaliana (Mouse-ear cress)).